The primary structure comprises 363 residues: Melanoma-associated antigen B16 (363 aa).

The tract at residues 33–124 (EPCSSPHLMA…PDQSDSTDLP (92 aa)) is disordered. The segment covering 82-97 (ASTSSDLQHPYDSSSE) has biased composition (low complexity). Residues 128 to 327 (VDGKVDFLVN…TVFLSQYEEA (200 aa)) form the MAGE domain. The disordered stretch occupies residues 342–363 (HADSSSTSGESSSDTSSNFSQV).

This is Melanoma-associated antigen B16 (Mageb16) from Mus musculus (Mouse).